The following is a 529-amino-acid chain: Peptide chain release factor 3 (529 aa).

One can recognise a tr-type G domain in the interval 11-280; the sequence is AKRRTFAIIS…GLVEWAPAPM (270 aa). GTP-binding positions include 20 to 27, 88 to 92, and 142 to 145; these read SHPDAGKT, DTPGH, and NKLD.

It belongs to the TRAFAC class translation factor GTPase superfamily. Classic translation factor GTPase family. PrfC subfamily.

It localises to the cytoplasm. In terms of biological role, increases the formation of ribosomal termination complexes and stimulates activities of RF-1 and RF-2. It binds guanine nucleotides and has strong preference for UGA stop codons. It may interact directly with the ribosome. The stimulation of RF-1 and RF-2 is significantly reduced by GTP and GDP, but not by GMP. In Escherichia coli O8 (strain IAI1), this protein is Peptide chain release factor 3.